Here is a 461-residue protein sequence, read N- to C-terminus: Putative forkhead-related transcription factor fkh-5 (461 aa).

The segment at residues 171-262 is a DNA-binding region (fork-head); sequence QRPQLSYQLL…VEKEMIDVKT (92 aa).

Its subcellular location is the nucleus. Its function is as follows. Transcription factor. Binds to DNA sequence motif 5'-CTGTTTCA-3'. Regulates expression of a class of small RNAs, known as 21U-RNAs, perhaps acting redundantly with fkh-4 and fkh-3. This chain is Putative forkhead-related transcription factor fkh-5 (fkh-5), found in Caenorhabditis elegans.